We begin with the raw amino-acid sequence, 702 residues long: Phosphoglycerol transferase I (702 aa).

The next 3 membrane-spanning stretches (helical) occupy residues 2–22 (HWML…SPRL), 71–91 (FSGY…PLLL), and 103–123 (GGAV…ASPL).

Belongs to the OpgB family.

It localises to the cell inner membrane. It carries out the reaction a phosphatidylglycerol + a membrane-derived-oligosaccharide D-glucose = a 1,2-diacyl-sn-glycerol + a membrane-derived-oligosaccharide 6-(glycerophospho)-D-glucose.. It functions in the pathway glycan metabolism; osmoregulated periplasmic glucan (OPG) biosynthesis. Its function is as follows. Transfers a phosphoglycerol residue from phosphatidylglycerol to the membrane-bound nascent glucan backbones. The polypeptide is Phosphoglycerol transferase I (Xanthomonas euvesicatoria pv. vesicatoria (strain 85-10) (Xanthomonas campestris pv. vesicatoria)).